The following is a 453-amino-acid chain: tRNA-2-methylthio-N(6)-dimethylallyladenosine synthase (453 aa).

In terms of domain architecture, MTTase N-terminal spans 7-123 (GTYWITTFGC…LDTLLSQVEA (117 aa)). [4Fe-4S] cluster-binding residues include cysteine 16, cysteine 52, cysteine 86, cysteine 158, cysteine 162, and cysteine 165. Positions 144–381 (RDSSLCAWVN…NALVERKAKA (238 aa)) constitute a Radical SAM core domain. Residues 384-447 (QRYLGRVEEV…AFSLSGSAQA (64 aa)) enclose the TRAM domain.

It belongs to the methylthiotransferase family. MiaB subfamily. In terms of assembly, monomer. [4Fe-4S] cluster serves as cofactor.

Its subcellular location is the cytoplasm. The enzyme catalyses N(6)-dimethylallyladenosine(37) in tRNA + (sulfur carrier)-SH + AH2 + 2 S-adenosyl-L-methionine = 2-methylsulfanyl-N(6)-dimethylallyladenosine(37) in tRNA + (sulfur carrier)-H + 5'-deoxyadenosine + L-methionine + A + S-adenosyl-L-homocysteine + 2 H(+). Catalyzes the methylthiolation of N6-(dimethylallyl)adenosine (i(6)A), leading to the formation of 2-methylthio-N6-(dimethylallyl)adenosine (ms(2)i(6)A) at position 37 in tRNAs that read codons beginning with uridine. This chain is tRNA-2-methylthio-N(6)-dimethylallyladenosine synthase, found in Synechococcus sp. (strain RCC307).